A 383-amino-acid polypeptide reads, in one-letter code: Acetylornithine deacetylase (383 aa).

His-80 contributes to the Zn(2+) binding site. Residue Asp-82 is part of the active site. Asp-112 contacts Zn(2+). Glu-144 is an active-site residue. Positions 145, 169, and 355 each coordinate Zn(2+).

The protein belongs to the peptidase M20A family. ArgE subfamily. As to quaternary structure, homodimer. The cofactor is Zn(2+). It depends on Co(2+) as a cofactor. Requires glutathione as cofactor.

It is found in the cytoplasm. It carries out the reaction N(2)-acetyl-L-ornithine + H2O = L-ornithine + acetate. Its pathway is amino-acid biosynthesis; L-arginine biosynthesis; L-ornithine from N(2)-acetyl-L-ornithine (linear): step 1/1. Its function is as follows. Catalyzes the hydrolysis of the amide bond of N(2)-acetylated L-amino acids. Cleaves the acetyl group from N-acetyl-L-ornithine to form L-ornithine, an intermediate in L-arginine biosynthesis pathway, and a branchpoint in the synthesis of polyamines. The chain is Acetylornithine deacetylase from Salmonella arizonae (strain ATCC BAA-731 / CDC346-86 / RSK2980).